We begin with the raw amino-acid sequence, 368 residues long: Probable multidrug ABC transporter permease YbhR (368 aa).

Topologically, residues 1 to 24 are cytoplasmic; it reads MFHRLWTLIRKELQSLLREPQTRA. The helical transmembrane segment at 25-45 threads the bilayer; it reads ILILPVLIQVILFPFAATLEV. The Periplasmic segment spans residues 46-173; sequence TNATIAIYDE…WYNPNLDYKW (128 aa). Positions 129-366 constitute an ABC transmembrane type-2 domain; it reads AQIAANYLQQ…SAAYAMFRRK (238 aa). A helical membrane pass occupies residues 174 to 194; sequence FVVPSLIAMITTIGVMIVTSL. Residues 195-222 lie on the Cytoplasmic side of the membrane; the sequence is SVAREREQGTLDQLLVSPLTTWQIFIGK. The helical transmembrane segment at 223 to 243 threads the bilayer; it reads AVPALIVATFQATIVLAIGIW. The Periplasmic segment spans residues 244 to 253; that stretch reads AYQIPFAGSL. A helical transmembrane segment spans residues 254–274; it reads ALFYFTMVIYGLSLVGFGLLI. Residues 275 to 284 lie on the Cytoplasmic side of the membrane; it reads SSLCSTQQQA. The helical transmembrane segment at 285-305 threads the bilayer; it reads FIGVFVFMMPAILLSGYVSPV. The Periplasmic segment spans residues 306 to 339; it reads ENMPVWLQNLTWINPIRHFTDITKQIYLKDASLD. Residues 340 to 360 form a helical membrane-spanning segment; sequence IVWNSLWPLLVITATTGSAAY. Topologically, residues 361–368 are cytoplasmic; it reads AMFRRKVM.

It belongs to the ABC-2 integral membrane protein family. In terms of assembly, the complex is probably composed of two ATP-binding proteins (YbhF) and two transmembrane proteins (YbhR and YbhS).

It localises to the cell inner membrane. Its function is as follows. Part of the ABC transporter complex YbhFSR that could be involved in efflux of cefoperazone. Probably involved in the translocation of the substrate across the membrane. The sequence is that of Probable multidrug ABC transporter permease YbhR (ybhR) from Escherichia coli O157:H7.